Here is an 820-residue protein sequence, read N- to C-terminus: Sodium/hydrogen exchanger 1 (820 aa).

At 1–102 the chain is on the extracellular side; sequence MMLRWSGIWG…FPVLDIDYLH (102 aa). The tract at residues 44–71 is disordered; sequence ASTIRGSEPPRERSIGDVTTAPSEPLHH. Residues 103-125 form a helical membrane-spanning segment; that stretch reads VRTPFEISLWILLACLMKIGFHV. Residues 126-134 are Cytoplasmic-facing; it reads IPTISSIVP. Residues 135 to 152 traverse the membrane as a helical segment; sequence ESCLLIVVGLLVGGLIKG. The Extracellular portion of the chain corresponds to 153–162; that stretch reads VGETPPFLQS. Residues 163–180 traverse the membrane as a helical segment; the sequence is DVFFLFLLPPIILDAGYF. Residues 181-190 are Cytoplasmic-facing; sequence LPLRQFTENL. A helical membrane pass occupies residues 191–219; it reads GTILIFAVVGTLWNAFFLGGLLYAVCLVG. At 220–226 the chain is on the extracellular side; it reads GEQINNI. The chain crosses the membrane as a helical span at residues 227-253; sequence GLLDTLLFGSIISAVDPVAVLAVFEEI. Topologically, residues 254-256 are cytoplasmic; that stretch reads HIN. A helical membrane pass occupies residues 257–287; that stretch reads ELLHILVFGESLLNDAVTVVLYHLFEEFASY. The Extracellular segment spans residues 288–291; it reads EYVG. The helical transmembrane segment at 292–326 threads the bilayer; sequence ISDIFLGFLSFFVVSLGGVFVGVVYGVIAAFTSRF. Residues 327–332 are Cytoplasmic-facing; sequence TSHIRV. A helical transmembrane segment spans residues 333-345; that stretch reads IEPLFVFLYSYMA. Over 346-354 the chain is Extracellular; it reads YLSAELFHL. Residues 355 to 375 traverse the membrane as a helical segment; the sequence is SGIMALIASGVVMRPYVEANI. Over 376–377 the chain is Cytoplasmic; that stretch reads SH. The chain crosses the membrane as a helical span at residues 378 to 408; it reads KSHTTIKYFLKMWSSVSETLIFIFLGVSTVA. Topologically, residues 409–414 are extracellular; it reads GSHQWN. The helical transmembrane segment at 415-442 threads the bilayer; that stretch reads WTFVISTLLFCLIARVLGVLVLTWFINK. Topologically, residues 443-448 are cytoplasmic; that stretch reads FRIVKL. Residues 449 to 473 form a helical membrane-spanning segment; the sequence is TPKDQFIIAYGGLRGAIAFSLGYLL. Over 474 to 479 the chain is Extracellular; the sequence is DKKHFP. A helical transmembrane segment spans residues 480 to 509; that stretch reads MCDLFLTAIITVIFFTVFVQGMTIRPLVDL. The interaction with TESC stretch occupies residues 505-571; sequence PLVDLLAVKK…VKKCLIAGER (67 aa). Residues 510-820 lie on the Cytoplasmic side of the membrane; that stretch reads LAVKKKQETK…EGEPFIPKGQ (311 aa). The tract at residues 513–520 is PI(4,5)P2-binding region; the sequence is KKKQETKR. The interaction with CHP2 stretch occupies residues 519–549; that stretch reads KRSINEEIHTQFLDHLLTGIEDICGHYGHHH. Positions 544 to 549 are confers pH-dependent PI(4,5)P2 binding; that stretch reads HYGHHH. Residues 556 to 564 form a PI(4,5)P2-binding region region; the sequence is RFNKKYVKK. A phosphoserine mark is found at S603 and S606. A Phosphothreonine modification is found at T607. Residues S609 and S652 each carry the phosphoserine modification. The interaction with TESC stretch occupies residues 637-820; sequence KILRSNLQKT…EGEPFIPKGQ (184 aa). Residues 637–820 form an interaction with CALM1 region; the sequence is KILRSNLQKT…EGEPFIPKGQ (184 aa). Positions 688-691 are interaction with PPP3CA; the sequence is LTVP. S697, S701, and S707 each carry phosphoserine. Residues 719–724 are interaction with PPP3CA; the sequence is PVITID. Phosphoserine occurs at positions 727, 730, and 733. Positions 747 to 820 are disordered; it reads GLKRGPRTTP…EGEPFIPKGQ (74 aa). T755 and T784 each carry phosphothreonine. A phosphoserine mark is found at S790 and S801.

Belongs to the monovalent cation:proton antiporter 1 (CPA1) transporter (TC 2.A.36) family. Homodimer; dimerization is crucial for its function. Oligomer. Interacts with CALM1 in a calcium-dependent manner. Interacts with TESC. Interacts (via residues 504-563) with CHP1. The interaction with CHP1 occurs at the plasma membrane in a calcium-dependent manner. Interacts with CHP2. The interaction with CHP2 occurs in a calcium-dependent manner. Interacts with EZR; regulates the cytoskeletal interactions of SLC9A1 and promotes stress fiber formation. N-glycosylated and O-glycosylated in the N-terminal region. Post-translationally, ubiquitinated, leading to its degradation by the proteasome. Ubiquitination is reduced by CHP1. In terms of processing, palmitoylated; may play a major role in SLC9A1 regulation. Phosphorylation at Thr-784 increases SLC9A1 activity; specifically dephosphorylated by PPP3CA. Specifically dephosphorylated at Thr-784 by PPP3CA that negatively regulates SLC9A1 activity. Phosphorylation at Ser-652 by AKT1 reduces SLC9A1 binding to CALM1. In terms of tissue distribution, widely expressed.

It is found in the cell membrane. It localises to the basolateral cell membrane. The enzyme catalyses Na(+)(in) + H(+)(out) = Na(+)(out) + H(+)(in). The catalysed reaction is Li(+)(out) + H(+)(in) = Li(+)(in) + H(+)(out). It carries out the reaction Li(+)(in) + Na(+)(out) = Li(+)(out) + Na(+)(in). Activated at acidic pHs. Inhibited by cariporide and eniporide. Inhibited by amiloride and 5-amino-substituted derivatives. Phosphatidylinositol 4,5-bisphosphate (PI(4,5)P2) bind and activates SLC9A1 transporter activity. In terms of biological role, electroneutral Na(+) /H(+) antiporter that extrudes Na(+) in exchange for external protons driven by the inward sodium ion chemical gradient, protecting cells from acidification that occurs from metabolism. Exchanges intracellular H(+) ions for extracellular Na(+) in 1:1 stoichiometry. Plays a key role in maintening intracellular pH neutral and cell volume, and thus is important for cell growth, proliferation, migration and survival. In addition, can transport lithium Li(+) and also functions as a Na(+)/Li(+) antiporter. SLC9A1 also functions in membrane anchoring and organization of scaffolding complexes that coordinate signaling inputs. The protein is Sodium/hydrogen exchanger 1 (Slc9a1) of Rattus norvegicus (Rat).